The chain runs to 387 residues: Mitogen-activated protein kinase homolog MMK1 (387 aa).

In terms of domain architecture, Protein kinase spans 55-340; the sequence is KPPIMPIGKG…VEDALAHPYL (286 aa). Residues 61 to 69 and K84 contribute to the ATP site; that span reads IGKGAYGIV. D181 serves as the catalytic Proton acceptor. T213 carries the post-translational modification Phosphothreonine. The TXY signature appears at 213–215; it reads TEY. Y215 carries the post-translational modification Phosphotyrosine.

It belongs to the protein kinase superfamily. CMGC Ser/Thr protein kinase family. MAP kinase subfamily. Requires Mg(2+) as cofactor. Post-translationally, dually phosphorylated on Thr-213 and Tyr-215, which activates the enzyme. Autophosphorylated. Roots and stems.

It catalyses the reaction L-seryl-[protein] + ATP = O-phospho-L-seryl-[protein] + ADP + H(+). The catalysed reaction is L-threonyl-[protein] + ATP = O-phospho-L-threonyl-[protein] + ADP + H(+). With respect to regulation, activated by tyrosine and threonine phosphorylation. Functionally, may play a role in the mitogenic induction of symbiotic root nodules on Alfalfa by Rhizobium signal molecules. The chain is Mitogen-activated protein kinase homolog MMK1 (MMK1) from Medicago sativa (Alfalfa).